A 540-amino-acid chain; its full sequence is Threonine--tRNA ligase catalytic subunit (540 aa).

A catalytic region spans residues 134 to 428; it reads DHRIIGERLD…LLEHFRGKLP (295 aa). The Zn(2+) site is built by Cys-226, His-277, and His-405.

It belongs to the class-II aminoacyl-tRNA synthetase family. Homodimer. Probably interacts with its editing subunit. Zn(2+) serves as cofactor.

It is found in the cytoplasm. The catalysed reaction is tRNA(Thr) + L-threonine + ATP = L-threonyl-tRNA(Thr) + AMP + diphosphate + H(+). Its function is as follows. Catalyzes the attachment of threonine to tRNA(Thr) in a two-step reaction: L-threonine is first activated by ATP to form Thr-AMP and then transferred to the acceptor end of tRNA(Thr). Also activates L-serine and transfers it to tRNA(Thr) but cannot deacylate incorrectly charged amino acid; unlike most archaea the editing function is found in a freestanding protein. This Sulfurisphaera tokodaii (strain DSM 16993 / JCM 10545 / NBRC 100140 / 7) (Sulfolobus tokodaii) protein is Threonine--tRNA ligase catalytic subunit.